The sequence spans 140 residues: Granulocyte-macrophage colony-stimulating factor (140 aa).

Positions 1–17 are cleaved as a signal peptide; sequence MWLQNLLLLGTVVCSIC. Ser24 carries O-linked (GalNAc...) serine glycosylation. O-linked (GalNAc...) threonine glycosylation occurs at Thr27. Asn45, Asn55, and Asn87 each carry an N-linked (GlcNAc...) asparagine glycan. 2 disulfides stabilise this stretch: Cys72–Cys114 and Cys106–Cys139.

Belongs to the GM-CSF family. In terms of assembly, monomer. The signaling GM-CSF receptor complex is a dodecamer of two head-to-head hexamers of two alpha, two beta, and two ligand subunits.

The protein localises to the secreted. Functionally, cytokine that stimulates the growth and differentiation of hematopoietic precursor cells from various lineages, including granulocytes, macrophages, eosinophils and erythrocytes. In Cavia porcellus (Guinea pig), this protein is Granulocyte-macrophage colony-stimulating factor (CSF2).